A 524-amino-acid polypeptide reads, in one-letter code: Casein kinase I homolog 3 (524 aa).

A Protein kinase domain is found at 14 to 319 (YAVGPKIGEG…YLISLMDDAL (306 aa)). ATP-binding positions include 20–28 (IGEGSFGVI) and Lys60. Asp150 functions as the Proton acceptor in the catalytic mechanism. Disordered regions lie at residues 352–414 (HGYG…KQQH) and 427–474 (PETH…EHNL). The segment covering 360–373 (RVNGNTARNNVNTN) has biased composition (low complexity). 2 stretches are compositionally biased toward polar residues: residues 374–413 (SKTRNTTPVATPKQQAQNSYNKDNSKSRISSNPQSFTKQQ) and 429–474 (THSN…EHNL). The short motif at 444 to 447 (YDSI) is the YXXZ targeting signal element. 7 S-palmitoyl cysteine lipidation sites follow: Cys517, Cys518, Cys519, Cys520, Cys522, Cys523, and Cys524.

The protein belongs to the protein kinase superfamily. CK1 Ser/Thr protein kinase family. Casein kinase I subfamily.

The protein localises to the cell membrane. It is found in the nucleus membrane. It localises to the vacuole membrane. The enzyme catalyses L-seryl-[protein] + ATP = O-phospho-L-seryl-[protein] + ADP + H(+). It carries out the reaction L-threonyl-[protein] + ATP = O-phospho-L-threonyl-[protein] + ADP + H(+). Its function is as follows. Casein kinases are operationally defined by their preferential utilization of acidic proteins such as caseins as substrates. Phosphorylates MON1, inhibiting the guanine nucleotide exchange factor activity of the MON1-CCZ1 complex, possibly by preventing its recruitment to membranes by small GTPase RAB5 homologs. This is Casein kinase I homolog 3 (YCK3) from Saccharomyces cerevisiae (strain ATCC 204508 / S288c) (Baker's yeast).